A 206-amino-acid polypeptide reads, in one-letter code: Thiamine-phosphate synthase (206 aa).

Residues 39–43 and Asn-74 contribute to the 4-amino-2-methyl-5-(diphosphooxymethyl)pyrimidine site; that span reads QYREK. Mg(2+) contacts are provided by Asp-75 and Asp-94. Ser-112 is a 4-amino-2-methyl-5-(diphosphooxymethyl)pyrimidine binding site. Position 138–140 (138–140) interacts with 2-[(2R,5Z)-2-carboxy-4-methylthiazol-5(2H)-ylidene]ethyl phosphate; sequence TNT. Position 141 (Lys-141) interacts with 4-amino-2-methyl-5-(diphosphooxymethyl)pyrimidine. 2-[(2R,5Z)-2-carboxy-4-methylthiazol-5(2H)-ylidene]ethyl phosphate contacts are provided by residues Gly-170 and 190 to 191; that span reads IS.

This sequence belongs to the thiamine-phosphate synthase family. Requires Mg(2+) as cofactor.

It catalyses the reaction 2-[(2R,5Z)-2-carboxy-4-methylthiazol-5(2H)-ylidene]ethyl phosphate + 4-amino-2-methyl-5-(diphosphooxymethyl)pyrimidine + 2 H(+) = thiamine phosphate + CO2 + diphosphate. It carries out the reaction 2-(2-carboxy-4-methylthiazol-5-yl)ethyl phosphate + 4-amino-2-methyl-5-(diphosphooxymethyl)pyrimidine + 2 H(+) = thiamine phosphate + CO2 + diphosphate. The catalysed reaction is 4-methyl-5-(2-phosphooxyethyl)-thiazole + 4-amino-2-methyl-5-(diphosphooxymethyl)pyrimidine + H(+) = thiamine phosphate + diphosphate. It participates in cofactor biosynthesis; thiamine diphosphate biosynthesis; thiamine phosphate from 4-amino-2-methyl-5-diphosphomethylpyrimidine and 4-methyl-5-(2-phosphoethyl)-thiazole: step 1/1. In terms of biological role, condenses 4-methyl-5-(beta-hydroxyethyl)thiazole monophosphate (THZ-P) and 2-methyl-4-amino-5-hydroxymethyl pyrimidine pyrophosphate (HMP-PP) to form thiamine monophosphate (TMP). The chain is Thiamine-phosphate synthase from Oceanobacillus iheyensis (strain DSM 14371 / CIP 107618 / JCM 11309 / KCTC 3954 / HTE831).